Reading from the N-terminus, the 369-residue chain is Anhydro-N-acetylmuramic acid kinase (369 aa).

12–19 serves as a coordination point for ATP; that stretch reads GTSLDGVD.

The protein belongs to the anhydro-N-acetylmuramic acid kinase family.

It carries out the reaction 1,6-anhydro-N-acetyl-beta-muramate + ATP + H2O = N-acetyl-D-muramate 6-phosphate + ADP + H(+). It participates in amino-sugar metabolism; 1,6-anhydro-N-acetylmuramate degradation. The protein operates within cell wall biogenesis; peptidoglycan recycling. Its function is as follows. Catalyzes the specific phosphorylation of 1,6-anhydro-N-acetylmuramic acid (anhMurNAc) with the simultaneous cleavage of the 1,6-anhydro ring, generating MurNAc-6-P. Is required for the utilization of anhMurNAc either imported from the medium or derived from its own cell wall murein, and thus plays a role in cell wall recycling. In Actinobacillus pleuropneumoniae serotype 5b (strain L20), this protein is Anhydro-N-acetylmuramic acid kinase.